The primary structure comprises 55 residues: Methylmalonyl-CoA decarboxylase subunit epsilon (55 aa).

The methylmalonyl-CoA decarboxylase is composed of five subunits: the carboxyltransferase alpha subunit (MmdA), the tunnel beta subunit (MmdB), the biotin-containing gamma subunit (MmdC), and the delta (MmdD) and epsilon (MmdE) subunits.

The protein localises to the cell membrane. It carries out the reaction (S)-methylmalonyl-CoA + Na(+)(in) + H(+)(out) = propanoyl-CoA + Na(+)(out) + CO2. Its activity is regulated as follows. Completely inhibited by avidin. Subunit of the sodium ion pump methylmalonyl-CoA decarboxylase, which converts the chemical energy of a decarboxylation reaction into an electrochemical gradient of Na(+) ions across the cytoplasmic membrane, thereby creating a sodium ion motive force that is used for ATP synthesis. The epsilon subunit seems not important for the catalysis of either decarboxylation or Na(+) transport, but it improves binding of the alpha subunit and plays an important role in stabilizing the methylmalonyl-CoA-decarboxylase enzyme complex. Can also convert malonyl-CoA into acetyl-CoA. The polypeptide is Methylmalonyl-CoA decarboxylase subunit epsilon (Veillonella parvula (Staphylococcus parvulus)).